Here is a 536-residue protein sequence, read N- to C-terminus: MRRRGGDSFRRAGRRKISNVVWWVLSGIALLLFFLILSKAGHIEPRPSIPKRRYRNDKFVEGMNMTEEMLSPTSVARQVNDQIALAKAFVVIAKESKNLQFAWDLSAQIRNSQLLLSSAATRRSPLTVLESESTIRDMAVLLYQAQQLHYDSATMIMRLKASIQALEEQMSSVSEKSSKYGQIAAEEVPKSLYCLGVRLTTEWFQNLDLQRTLKERSRVDSKLTDNSLYHFCVFSDNIIATSVVVNSTALNSKAPEKVVFHLVTNEINYAAMKAWFAINMDNLRGVTVEVQKFEDFSWLNASYVPVLKQLQDSDTQSYYFSGHNDDGRTPIKFRNPKYLSMLNHLRFYIPEVFPALKKVVFLDDDVVVQKDLSSLFSIDLNKNVNGAVETCMETFHRYHKYLNYSHPLIRSHFDPDACGWAFGMNVFDLVEWRKRNVTGIYHYWQEKNVDRTLWKLGTLPPGLLTFYGLTEALEASWHILGLGYTNVDARVIEKGAVLHFNGNLKPWLKIGIEKYKPLWERYVDYTSPFMQQCNFH.

Topologically, residues 1–16 (MRRRGGDSFRRAGRRK) are cytoplasmic. Residues 17–37 (ISNVVWWVLSGIALLLFFLIL) traverse the membrane as a helical; Signal-anchor for type II membrane protein segment. Residues 38-536 (SKAGHIEPRP…SPFMQQCNFH (499 aa)) lie on the Lumenal side of the membrane. 5 N-linked (GlcNAc...) asparagine glycosylation sites follow: asparagine 64, asparagine 246, asparagine 300, asparagine 403, and asparagine 436.

This sequence belongs to the glycosyltransferase 8 family. Expressed in roots, inflorescences, siliques, leaves and stems.

The protein localises to the golgi apparatus membrane. Its pathway is glycan metabolism; pectin biosynthesis. May be involved in pectin and/or xylans biosynthesis in cell walls. This is Probable galacturonosyltransferase 10 (GAUT10) from Arabidopsis thaliana (Mouse-ear cress).